Here is a 241-residue protein sequence, read N- to C-terminus: Probable transcriptional regulatory protein str0195 (241 aa).

This sequence belongs to the TACO1 family. YeeN subfamily.

The protein localises to the cytoplasm. In Streptococcus thermophilus (strain CNRZ 1066), this protein is Probable transcriptional regulatory protein str0195.